Here is a 96-residue protein sequence, read N- to C-terminus: Putative defensin-like protein 263 (96 aa).

The first 26 residues, 1-26, serve as a signal peptide directing secretion; that stretch reads MEKTSLKLVFLFSLTVIALCLSLSAA. Intrachain disulfides connect Cys48/Cys96, Cys67/Cys86, Cys73/Cys91, and Cys77/Cys93.

Belongs to the DEFL family.

The protein resides in the secreted. In Arabidopsis thaliana (Mouse-ear cress), this protein is Putative defensin-like protein 263.